The chain runs to 750 residues: Tyrosine-protein phosphatase 2 (750 aa).

The interval 1–20 (MDRIAQQYRNGKRDNNGNRM) is disordered. S258 bears the Phosphoserine mark. 2 disordered regions span residues 327 to 348 (LHQK…SKLY) and 425 to 450 (VKLP…DKSY). Positions 330–348 (KQLSQKQRGPQSTDDSKLY) are enriched in polar residues. A Tyrosine-protein phosphatase domain is found at 383–737 (SPSPLSSDDT…IACYEALLNY (355 aa)). Position 430 is a phosphoserine (S430). C666 functions as the Phosphocysteine intermediate in the catalytic mechanism.

Belongs to the protein-tyrosine phosphatase family. Non-receptor class subfamily. In terms of assembly, interacts with HOG1.

It is found in the cytoplasm. Its subcellular location is the nucleus. The catalysed reaction is O-phospho-L-tyrosyl-[protein] + H2O = L-tyrosyl-[protein] + phosphate. Its function is as follows. Major phosphatase responsible with PTP3 for tyrosine dephosphorylation of MAP kinase HOG1 to inactivate its activity. May also be involved in the regulation of MAP kinase FUS3. May be implicated in the ubiquitin-mediated protein degradation. This Saccharomyces cerevisiae (strain ATCC 204508 / S288c) (Baker's yeast) protein is Tyrosine-protein phosphatase 2 (PTP2).